The chain runs to 564 residues: Eukaryotic translation initiation factor 3 subunit L (564 aa).

Residue Ser2 is modified to N-acetylserine. Residue Ser21 is modified to Phosphoserine. The region spanning 331–537 is the PCI domain; that stretch reads DAIRVFANIL…IHIADTKVAR (207 aa). Lys465 and Lys549 each carry N6-acetyllysine.

This sequence belongs to the eIF-3 subunit L family. As to quaternary structure, component of the eukaryotic translation initiation factor 3 (eIF-3) complex, which is composed of 13 subunits: EIF3A, EIF3B, EIF3C, EIF3D, EIF3E, EIF3F, EIF3G, EIF3H, EIF3I, EIF3J, EIF3K, EIF3L and EIF3M. The eIF-3 complex appears to include 3 stable modules: module A is composed of EIF3A, EIF3B, EIF3G and EIF3I; module B is composed of EIF3F, EIF3H, and EIF3M; and module C is composed of EIF3C, EIF3D, EIF3E, EIF3K and EIF3L. EIF3C of module C binds EIF3B of module A and EIF3H of module B, thereby linking the three modules. EIF3J is a labile subunit that binds to the eIF-3 complex via EIF3B. The eIF-3 complex interacts with RPS6KB1 under conditions of nutrient depletion. Mitogenic stimulation leads to binding and activation of a complex composed of MTOR and RPTOR, leading to phosphorylation and release of RPS6KB1 and binding of EIF4B to eIF-3. Interacts with RRN3.

Its subcellular location is the cytoplasm. Functionally, component of the eukaryotic translation initiation factor 3 (eIF-3) complex, which is required for several steps in the initiation of protein synthesis. The eIF-3 complex associates with the 40S ribosome and facilitates the recruitment of eIF-1, eIF-1A, eIF-2:GTP:methionyl-tRNAi and eIF-5 to form the 43S pre-initiation complex (43S PIC). The eIF-3 complex stimulates mRNA recruitment to the 43S PIC and scanning of the mRNA for AUG recognition. The eIF-3 complex is also required for disassembly and recycling of post-termination ribosomal complexes and subsequently prevents premature joining of the 40S and 60S ribosomal subunits prior to initiation. The eIF-3 complex specifically targets and initiates translation of a subset of mRNAs involved in cell proliferation, including cell cycling, differentiation and apoptosis, and uses different modes of RNA stem-loop binding to exert either translational activation or repression. The sequence is that of Eukaryotic translation initiation factor 3 subunit L from Pan troglodytes (Chimpanzee).